A 106-amino-acid chain; its full sequence is Urease subunit beta (106 aa).

Belongs to the urease beta subunit family. Heterotrimer of UreA (gamma), UreB (beta) and UreC (alpha) subunits. Three heterotrimers associate to form the active enzyme.

It localises to the cytoplasm. The catalysed reaction is urea + 2 H2O + H(+) = hydrogencarbonate + 2 NH4(+). The protein operates within nitrogen metabolism; urea degradation; CO(2) and NH(3) from urea (urease route): step 1/1. The polypeptide is Urease subunit beta (Acinetobacter baumannii (strain SDF)).